The following is a 210-amino-acid chain: Redox-sensing transcriptional repressor Rex (210 aa).

Positions 17–56 form a DNA-binding region, H-T-H motif; it reads KYHRYLYELLKNDVDRISSKELSEKIGFTASQIRQDLNCF. Position 91–96 (91–96) interacts with NAD(+); that stretch reads GAGNIG.

It belongs to the transcriptional regulatory Rex family. In terms of assembly, homodimer.

It is found in the cytoplasm. Its function is as follows. Modulates transcription in response to changes in cellular NADH/NAD(+) redox state. In Clostridium botulinum (strain ATCC 19397 / Type A), this protein is Redox-sensing transcriptional repressor Rex.